A 335-amino-acid polypeptide reads, in one-letter code: GTPase Obg (335 aa).

The 158-residue stretch at 1-158 (MFLDQITIEL…RQVELELKLI (158 aa)) folds into the Obg domain. In terms of domain architecture, OBG-type G spans 159–334 (ADIGLVGFPN…LNSLFTNKLA (176 aa)). GTP contacts are provided by residues 165–172 (GFPNAGKS), 190–194 (FTTLQ), 215–218 (DIPG), 285–288 (NKID), and 315–317 (SGL). The Mg(2+) site is built by Ser172 and Thr192.

Belongs to the TRAFAC class OBG-HflX-like GTPase superfamily. OBG GTPase family. As to quaternary structure, monomer. Mg(2+) is required as a cofactor.

It is found in the cytoplasm. Functionally, an essential GTPase (4.1 pmol GTP/min). Cannot substitute endogenous obg in E.coli, has a partially dominant-negative phenotype upon overexpression in liquid culture leading to decreased growth rate in a concentration-dependent fashion, with 50% of cells being elongated. Binds GTP, GDP and possibly (p)ppGpp with moderate affinity, with high nucleotide exchange rates and a fairly low GTP hydrolysis rate. It may play a role in control of the cell cycle, stress response, ribosome biogenesis and in those bacteria that undergo differentiation, in morphogenesis control. This chain is GTPase Obg, found in Chlamydia abortus (strain DSM 27085 / S26/3) (Chlamydophila abortus).